A 35-amino-acid chain; its full sequence is Protein YbgU (35 aa).

The protein is Protein YbgU of Escherichia coli (strain K12).